The following is a 320-amino-acid chain: Aspartate carbamoyltransferase catalytic subunit (320 aa).

Positions 68 and 69 each coordinate carbamoyl phosphate. Lys-96 contributes to the L-aspartate binding site. Carbamoyl phosphate-binding residues include Arg-118, His-148, and Gln-151. L-aspartate-binding residues include Arg-181 and Arg-236. Carbamoyl phosphate-binding residues include Gly-277 and Pro-278.

It belongs to the aspartate/ornithine carbamoyltransferase superfamily. ATCase family. Heterododecamer (2C3:3R2) of six catalytic PyrB chains organized as two trimers (C3), and six regulatory PyrI chains organized as three dimers (R2).

It catalyses the reaction carbamoyl phosphate + L-aspartate = N-carbamoyl-L-aspartate + phosphate + H(+). It functions in the pathway pyrimidine metabolism; UMP biosynthesis via de novo pathway; (S)-dihydroorotate from bicarbonate: step 2/3. Catalyzes the condensation of carbamoyl phosphate and aspartate to form carbamoyl aspartate and inorganic phosphate, the committed step in the de novo pyrimidine nucleotide biosynthesis pathway. The chain is Aspartate carbamoyltransferase catalytic subunit from Polaromonas sp. (strain JS666 / ATCC BAA-500).